The sequence spans 92 residues: Large ribosomal subunit protein bL31 (92 aa).

It belongs to the bacterial ribosomal protein bL31 family. Type A subfamily. In terms of assembly, part of the 50S ribosomal subunit.

Its function is as follows. Binds the 23S rRNA. This is Large ribosomal subunit protein bL31 from Mesoplasma florum (strain ATCC 33453 / NBRC 100688 / NCTC 11704 / L1) (Acholeplasma florum).